A 177-amino-acid chain; its full sequence is MTGPDEIAELVASLTREVADFPEPGVQFKDLTPLFADADGLSRVTDALAQAASGATLIAGIDARGFLLGAAVAIRLGVGVLAVRKAGKLPPPVHAQTYQLEYGTAALEIPADGVELAGRRVAIVDDVLATGGTLAATARLLTTAGADVISAGVVLELSDLGGRAAVAPLPLTALRAI.

The protein belongs to the purine/pyrimidine phosphoribosyltransferase family. Homodimer.

Its subcellular location is the cytoplasm. It carries out the reaction AMP + diphosphate = 5-phospho-alpha-D-ribose 1-diphosphate + adenine. Its pathway is purine metabolism; AMP biosynthesis via salvage pathway; AMP from adenine: step 1/1. Catalyzes a salvage reaction resulting in the formation of AMP, that is energically less costly than de novo synthesis. This chain is Adenine phosphoribosyltransferase, found in Mycobacteroides abscessus (strain ATCC 19977 / DSM 44196 / CCUG 20993 / CIP 104536 / JCM 13569 / NCTC 13031 / TMC 1543 / L948) (Mycobacterium abscessus).